We begin with the raw amino-acid sequence, 227 residues long: Cytochrome c oxidase subunit 2 (227 aa).

Residues 1-14 lie on the Mitochondrial intermembrane side of the membrane; sequence MAHPVQLSLQDATS. Residues 15–45 form a helical membrane-spanning segment; that stretch reads PVMEELITFHDHAFMAMSLISFLVLYALLST. The Mitochondrial matrix portion of the chain corresponds to 46 to 59; sequence LTTKLTNTSITDAQ. Residues 60–87 traverse the membrane as a helical segment; it reads EMETIWTILPAIILILIALPSLRILYLT. Residues 88-227 are Mitochondrial intermembrane-facing; the sequence is DEVNDPSFTI…IFEMGPVLTL (140 aa). The Cu cation site is built by histidine 161, cysteine 196, glutamate 198, cysteine 200, histidine 204, and methionine 207. Glutamate 198 lines the Mg(2+) pocket.

Belongs to the cytochrome c oxidase subunit 2 family. As to quaternary structure, component of the cytochrome c oxidase (complex IV, CIV), a multisubunit enzyme composed of 14 subunits. The complex is composed of a catalytic core of 3 subunits MT-CO1, MT-CO2 and MT-CO3, encoded in the mitochondrial DNA, and 11 supernumerary subunits COX4I, COX5A, COX5B, COX6A, COX6B, COX6C, COX7A, COX7B, COX7C, COX8 and NDUFA4, which are encoded in the nuclear genome. The complex exists as a monomer or a dimer and forms supercomplexes (SCs) in the inner mitochondrial membrane with NADH-ubiquinone oxidoreductase (complex I, CI) and ubiquinol-cytochrome c oxidoreductase (cytochrome b-c1 complex, complex III, CIII), resulting in different assemblies (supercomplex SCI(1)III(2)IV(1) and megacomplex MCI(2)III(2)IV(2)). Found in a complex with TMEM177, COA6, COX18, COX20, SCO1 and SCO2. Interacts with TMEM177 in a COX20-dependent manner. Interacts with COX20. Interacts with COX16. Requires Cu cation as cofactor.

It localises to the mitochondrion inner membrane. It catalyses the reaction 4 Fe(II)-[cytochrome c] + O2 + 8 H(+)(in) = 4 Fe(III)-[cytochrome c] + 2 H2O + 4 H(+)(out). Component of the cytochrome c oxidase, the last enzyme in the mitochondrial electron transport chain which drives oxidative phosphorylation. The respiratory chain contains 3 multisubunit complexes succinate dehydrogenase (complex II, CII), ubiquinol-cytochrome c oxidoreductase (cytochrome b-c1 complex, complex III, CIII) and cytochrome c oxidase (complex IV, CIV), that cooperate to transfer electrons derived from NADH and succinate to molecular oxygen, creating an electrochemical gradient over the inner membrane that drives transmembrane transport and the ATP synthase. Cytochrome c oxidase is the component of the respiratory chain that catalyzes the reduction of oxygen to water. Electrons originating from reduced cytochrome c in the intermembrane space (IMS) are transferred via the dinuclear copper A center (CU(A)) of subunit 2 and heme A of subunit 1 to the active site in subunit 1, a binuclear center (BNC) formed by heme A3 and copper B (CU(B)). The BNC reduces molecular oxygen to 2 water molecules using 4 electrons from cytochrome c in the IMS and 4 protons from the mitochondrial matrix. This Macaca mulatta (Rhesus macaque) protein is Cytochrome c oxidase subunit 2 (MT-CO2).